Reading from the N-terminus, the 465-residue chain is GTPase Der (465 aa).

2 consecutive EngA-type G domains span residues 3–166 and 184–358; these read FLVA…LNEY and IHFS…ACAN. Residues 9 to 16, 56 to 60, 118 to 121, 190 to 197, 237 to 241, and 302 to 305 each bind GTP; these read GRANVGKS, DTGGI, NKVD, GRPNVGKS, DTAGV, and NKWD. A KH-like domain is found at 359–443; it reads KKITTADATR…PIVFEFKQSE (85 aa). Residues 446–465 form a disordered region; that stretch reads FADRKNKRSKDEGSKSKKVK.

The protein belongs to the TRAFAC class TrmE-Era-EngA-EngB-Septin-like GTPase superfamily. EngA (Der) GTPase family. As to quaternary structure, associates with the 50S ribosomal subunit.

Functionally, GTPase that plays an essential role in the late steps of ribosome biogenesis. The sequence is that of GTPase Der from Francisella tularensis subsp. tularensis (strain WY96-3418).